The chain runs to 135 residues: Nitrogen fixation protein NifU 1 (135 aa).

A compositionally biased stretch (basic and acidic residues) spans 1-10; that stretch reads MRDMQDDDTK. Positions 1–29 are disordered; it reads MRDMQDDDTKSPAPPPAAAAAARRAAGQA. Low complexity predominate over residues 18 to 29; sequence AAAAARRAAGQA.

Belongs to the NifU family.

Its function is as follows. May be involved in the formation or repair of [Fe-S] clusters present in iron-sulfur proteins. The polypeptide is Nitrogen fixation protein NifU 1 (nifU1) (Rhodobacter capsulatus (Rhodopseudomonas capsulata)).